A 346-amino-acid chain; its full sequence is Putative serine/threonine-protein kinase K06H7.1 (346 aa).

One can recognise a Protein kinase domain in the interval 20–287; the sequence is YKVVQKLGEG…KLFKLLEDVM (268 aa). ATP is bound by residues 26 to 34 and lysine 50; that span reads LGEGGCGSV. The active-site Proton acceptor is aspartate 141. Positions 302-326 are disordered; that stretch reads PEKKKNPASQGNKFGLGKKGTKESG.

The protein belongs to the protein kinase superfamily. Ser/Thr protein kinase family.

The catalysed reaction is L-seryl-[protein] + ATP = O-phospho-L-seryl-[protein] + ADP + H(+). The enzyme catalyses L-threonyl-[protein] + ATP = O-phospho-L-threonyl-[protein] + ADP + H(+). The protein is Putative serine/threonine-protein kinase K06H7.1 of Caenorhabditis elegans.